Reading from the N-terminus, the 409-residue chain is PPE family protein PPE32 (409 aa).

It belongs to the mycobacterial PPE family. In terms of assembly, interacts with host Toll-like receptor 2 (TLR2).

The protein localises to the secreted. The protein resides in the cell wall. It localises to the cell surface. Its function is as follows. Virulence factor that modulates the production of host cytokines. This chain is PPE family protein PPE32, found in Mycobacterium tuberculosis (strain CDC 1551 / Oshkosh).